The sequence spans 67 residues: UPF0337 protein Atu4724 (67 aa).

This sequence belongs to the UPF0337 (CsbD) family.

This chain is UPF0337 protein Atu4724, found in Agrobacterium fabrum (strain C58 / ATCC 33970) (Agrobacterium tumefaciens (strain C58)).